The primary structure comprises 100 residues: MNNETKFTPLNIDNVMAEKGMLERVRAIVEYGIKHNLTAREVRDIINREMNRLETVVALQNETAREEYIRRRLGLSDQDIVTDAHVFEAFEIRQHLGLTN.

The protein belongs to the mulikevirus gp14 protein family.

The protein resides in the host cytoplasm. This is an uncharacterized protein from Enterobacteriaceae (Bacteriophage Mu).